The primary structure comprises 156 residues: Transcription antitermination protein NusB (156 aa).

It belongs to the NusB family.

In terms of biological role, involved in transcription antitermination. Required for transcription of ribosomal RNA (rRNA) genes. Binds specifically to the boxA antiterminator sequence of the ribosomal RNA (rrn) operons. The protein is Transcription antitermination protein NusB of Rickettsia massiliae (strain Mtu5).